The sequence spans 451 residues: UDP-glycosyltransferase 76C4 (451 aa).

UDP-alpha-D-glucose is bound by residues S273, 332–334 (APQ), 349–357 (HNGWNSTVE), and 371–374 (RWDQ).

It belongs to the UDP-glycosyltransferase family.

This is UDP-glycosyltransferase 76C4 (UGT76C4) from Arabidopsis thaliana (Mouse-ear cress).